The chain runs to 506 residues: Exopolyphosphatase (506 aa).

Belongs to the GppA/Ppx family. Homodimer. Mg(2+) is required as a cofactor.

Its subcellular location is the cell membrane. It catalyses the reaction [phosphate](n) + H2O = [phosphate](n-1) + phosphate + H(+). The catalysed reaction is [phosphate](n) + ATP = [phosphate](n+1) + ADP. Its activity is regulated as follows. Exopolyphosphatase activity is stimulated by NH(4)(+) and K(+). Phosphotransferase activity is insensitive to the addition of K(+) or NH(4)(+) ions. Functionally, degradation of inorganic polyphosphates (polyP). Releases orthophosphate processively from the ends of the polyP chain. Also has polyphosphate:ADP phosphotransferase activity, catalyzing the production of ATP from ADP and polyP. This Pseudomonas aeruginosa (strain ATCC 15692 / DSM 22644 / CIP 104116 / JCM 14847 / LMG 12228 / 1C / PRS 101 / PAO1) protein is Exopolyphosphatase.